Consider the following 231-residue polypeptide: Putative N-acetylmannosamine-6-phosphate 2-epimerase (231 aa).

Belongs to the NanE family.

The catalysed reaction is an N-acyl-D-glucosamine 6-phosphate = an N-acyl-D-mannosamine 6-phosphate. The protein operates within amino-sugar metabolism; N-acetylneuraminate degradation; D-fructose 6-phosphate from N-acetylneuraminate: step 3/5. In terms of biological role, converts N-acetylmannosamine-6-phosphate (ManNAc-6-P) to N-acetylglucosamine-6-phosphate (GlcNAc-6-P). This Glaesserella parasuis serovar 5 (strain SH0165) (Haemophilus parasuis) protein is Putative N-acetylmannosamine-6-phosphate 2-epimerase.